The primary structure comprises 294 residues: uncharacterized protein (294 aa).

Active-site charge relay system residues include T43 and Y104. The active-site Proton donor is Y130. Catalysis depends on K158, which acts as the Schiff-base intermediate with substrate.

This sequence belongs to the DapA family. Homotetramer.

It localises to the cytoplasm. This is an uncharacterized protein from Pyrococcus abyssi (strain GE5 / Orsay).